The chain runs to 478 residues: Protein nucleotidyltransferase YdiU (478 aa).

ATP is bound by residues glycine 84, glycine 86, arginine 87, lysine 107, aspartate 119, glycine 120, arginine 170, and arginine 177. Catalysis depends on aspartate 246, which acts as the Proton acceptor. Residues asparagine 247 and aspartate 256 each coordinate Mg(2+). Aspartate 256 is an ATP binding site.

Belongs to the SELO family. The cofactor is Mg(2+). It depends on Mn(2+) as a cofactor.

The enzyme catalyses L-seryl-[protein] + ATP = 3-O-(5'-adenylyl)-L-seryl-[protein] + diphosphate. It catalyses the reaction L-threonyl-[protein] + ATP = 3-O-(5'-adenylyl)-L-threonyl-[protein] + diphosphate. It carries out the reaction L-tyrosyl-[protein] + ATP = O-(5'-adenylyl)-L-tyrosyl-[protein] + diphosphate. The catalysed reaction is L-histidyl-[protein] + UTP = N(tele)-(5'-uridylyl)-L-histidyl-[protein] + diphosphate. The enzyme catalyses L-seryl-[protein] + UTP = O-(5'-uridylyl)-L-seryl-[protein] + diphosphate. It catalyses the reaction L-tyrosyl-[protein] + UTP = O-(5'-uridylyl)-L-tyrosyl-[protein] + diphosphate. Its function is as follows. Nucleotidyltransferase involved in the post-translational modification of proteins. It can catalyze the addition of adenosine monophosphate (AMP) or uridine monophosphate (UMP) to a protein, resulting in modifications known as AMPylation and UMPylation. The sequence is that of Protein nucleotidyltransferase YdiU from Shigella boydii serotype 4 (strain Sb227).